The chain runs to 287 residues: tRNA selenocysteine 1-associated protein 1 (287 aa).

2 RRM domains span residues 3 to 86 and 96 to 175; these read ASLW…YATY and YSLF…VAIP.

It belongs to the RRM TRSPAP family. Component of the tRNA(Sec) complex composed at least of EEFSEC, SECISBP2, SEPHS1, SEPSECS, TRNAU1AP and tRNA(Sec). Associates with mRNP and/or polysomes. Found in a complex with tRNA(Sec). Interacts with SEPSECS. As to expression, ubiquitous.

Its subcellular location is the nucleus. It is found in the cytoplasm. Its function is as follows. Involved in the early steps of selenocysteine biosynthesis and tRNA(Sec) charging to the later steps resulting in the cotranslational incorporation of selenocysteine into selenoproteins. Stabilizes the SECISBP2, EEFSEC and tRNA(Sec) complex. May be involved in the methylation of tRNA(Sec). Enhances efficiency of selenoproteins synthesis. This Rattus norvegicus (Rat) protein is tRNA selenocysteine 1-associated protein 1 (Trnau1ap).